A 427-amino-acid chain; its full sequence is 3-phosphoshikimate 1-carboxyvinyltransferase (427 aa).

Positions 22, 23, and 27 each coordinate 3-phosphoshikimate. Phosphoenolpyruvate is bound at residue K22. Phosphoenolpyruvate is bound by residues G94 and R122. 3-phosphoshikimate contacts are provided by S165, Q167, D313, and K340. Phosphoenolpyruvate is bound at residue Q167. D313 serves as the catalytic Proton acceptor. R344 and R386 together coordinate phosphoenolpyruvate.

It belongs to the EPSP synthase family. Monomer.

The protein localises to the cytoplasm. The enzyme catalyses 3-phosphoshikimate + phosphoenolpyruvate = 5-O-(1-carboxyvinyl)-3-phosphoshikimate + phosphate. It functions in the pathway metabolic intermediate biosynthesis; chorismate biosynthesis; chorismate from D-erythrose 4-phosphate and phosphoenolpyruvate: step 6/7. In terms of biological role, catalyzes the transfer of the enolpyruvyl moiety of phosphoenolpyruvate (PEP) to the 5-hydroxyl of shikimate-3-phosphate (S3P) to produce enolpyruvyl shikimate-3-phosphate and inorganic phosphate. This Koribacter versatilis (strain Ellin345) protein is 3-phosphoshikimate 1-carboxyvinyltransferase.